Reading from the N-terminus, the 293-residue chain is Proximal tail tube connector protein (293 aa).

Disordered regions lie at residues 106–166 and 192–240; these read VGVK…FKRD and QIEE…NDKL. Basic and acidic residues predominate over residues 112–126; the sequence is TKNDTDRNDNRDVKQ. Positions 127 to 160 are enriched in polar residues; the sequence is DLTSNGTSSTDAKQNDTSKTTGNEKSSGSGSITD. A compositionally biased stretch (basic and acidic residues) spans 193 to 205; it reads IEEHNENKKRDTK. The segment covering 206–231 has biased composition (low complexity); sequence TSNTTDTTSNTTGTSTLDSDSKTSNK.

It belongs to the phi29likevirus proximal tail tube connector protein family.

Its subcellular location is the virion. Forms the proximal part of the tail tube. In Bacillus phage PZA (Bacteriophage PZA), this protein is Proximal tail tube connector protein (11).